Here is a 344-residue protein sequence, read N- to C-terminus: RNA 3'-terminal phosphate cyclase (344 aa).

ATP contacts are provided by residues Q103 and H283–Q287. H308 acts as the Tele-AMP-histidine intermediate in catalysis.

The protein belongs to the RNA 3'-terminal cyclase family. Type 1 subfamily.

Its subcellular location is the cytoplasm. It carries out the reaction a 3'-end 3'-phospho-ribonucleotide-RNA + ATP = a 3'-end 2',3'-cyclophospho-ribonucleotide-RNA + AMP + diphosphate. In terms of biological role, catalyzes the conversion of 3'-phosphate to a 2',3'-cyclic phosphodiester at the end of RNA. The mechanism of action of the enzyme occurs in 3 steps: (A) adenylation of the enzyme by ATP; (B) transfer of adenylate to an RNA-N3'P to produce RNA-N3'PP5'A; (C) and attack of the adjacent 2'-hydroxyl on the 3'-phosphorus in the diester linkage to produce the cyclic end product. The biological role of this enzyme is unknown but it is likely to function in some aspects of cellular RNA processing. This is RNA 3'-terminal phosphate cyclase from Salmonella agona (strain SL483).